A 202-amino-acid chain; its full sequence is LexA repressor (202 aa).

A DNA-binding region (H-T-H motif) is located at residues 28–48; sequence RAEIAQRLGFRSPNAAEEHLK. Residues Ser119 and Lys156 each act as for autocatalytic cleavage activity in the active site.

This sequence belongs to the peptidase S24 family. In terms of assembly, homodimer.

It carries out the reaction Hydrolysis of Ala-|-Gly bond in repressor LexA.. In terms of biological role, represses a number of genes involved in the response to DNA damage (SOS response), including recA and lexA. Binds to the 16 bp palindromic sequence 5'-CTGTATATATATACAG-3'. In the presence of single-stranded DNA, RecA interacts with LexA causing an autocatalytic cleavage which disrupts the DNA-binding part of LexA, leading to derepression of the SOS regulon and eventually DNA repair. The chain is LexA repressor from Yersinia enterocolitica serotype O:8 / biotype 1B (strain NCTC 13174 / 8081).